The primary structure comprises 87 residues: UPF0250 protein NE1487 (87 aa).

It belongs to the UPF0250 family.

The sequence is that of UPF0250 protein NE1487 from Nitrosomonas europaea (strain ATCC 19718 / CIP 103999 / KCTC 2705 / NBRC 14298).